The sequence spans 219 residues: Transmembrane emp24 domain-containing protein 10 (219 aa).

The signal sequence occupies residues 1-31 (MSGLSGPLSWPGPLLSALLFLFLLGPSSVLG). A required for interaction with STX17 region spans residues 1–142 (MSGLSGPLSW…KNYEEIAKVE (142 aa)). The Lumenal portion of the chain corresponds to 32–185 (ISFHLPVNSR…RDTNESTNTR (154 aa)). A GOLD domain is found at 41 to 193 (RKCLREEIHK…TRVLYFSIFS (153 aa)). Positions 147–178 (LEVELRRLEDLSESIVNDFAYMKKREEEMRDT) are required for TMED10 and TMED2 cis-Golgi network localization. A dimethylated arginine mark is found at R171 and R176. N-linked (GlcNAc...) asparagine glycosylation occurs at N179. A helical membrane pass occupies residues 186–206 (VLYFSIFSMFCLIGLATWQVF). Positions 204–219 (QVFYLRRFFKAKKLIE) are interaction with COPG1. At 207-219 (YLRRFFKAKKLIE) the chain is on the cytoplasmic side. The interval 207–219 (YLRRFFKAKKLIE) is interaction with ARF1 and IL1B. The short motif at 211–212 (FF) is the COPII vesicle coat-binding element. Residues 211 to 219 (FFKAKKLIE) carry the COPI vesicle coat-binding motif.

It belongs to the EMP24/GP25L family. In terms of assembly, predominantly dimeric and to a lesser extent monomeric in the ER. Monomer and dimer in ERGIC and cis-Golgi network. Forms homooligomer (via GOLD domain); the assembly is promoted by direct binding with leaderless cargos and may form a protein channel that facilitates cargo entry into the ERGIC. Forms heterooligomeric complexes with other members of the p24 family such as TMED2, TMED7 and TMED9. Interacts (via GOLD domain) with TMED2 (via GOLD domain); the complex is required for export of TMED10 from the ER to the cis-Golgi network; the complex is proposed to be involved in cis-Golgi network dynamics and / or biogenesis. Associates with the COPI vesicle coat subunits (coatomer). Tetramerization of the cytoplasmic domain at the Golgi membrane in vitro; the complex is proposed to interact with COPI coatomer and induce budding of the vesicles. Interacts with COPG1; the interaction involves TMED10 homodimer. Interacts with ARF1 (GDP-bound); the interaction probably involves a TMED10 oligomer. Interacts with SEC23A, SEC24B, SEC24C and SEC24D components of the coat protein complex II/COPII, indicative of an association of TMED10 with the COPII vesicle coat. Interacts with CD59. Interacts with MPPE1/PGAP5; the complex might recruit and sort GPI-anchored proteins to the ER-exit site, or the interaction might lead to recycling of PGAP5 between the ER and the Golgi. Interacts with F2LR1/PAR2. Interacts with KDELR2/ERD2; the interaction is disrupted by KDELR2 ligand. Found in a complex composed at least of SURF4, TMED2 and TMED10. Associates with the presenilin-dependent gamma-secretase complex. Interacts with STX17; the interaction is direct. Interacts with IL-1; the interaction is direct. Interacts with RAB21 (active GTP-bound form); the interaction is indirect and regulates TMED10 abundance and localization at the Golgi. Ubiquitous.

Its subcellular location is the endoplasmic reticulum membrane. The protein localises to the endoplasmic reticulum-Golgi intermediate compartment membrane. It localises to the golgi apparatus membrane. The protein resides in the golgi apparatus. It is found in the cis-Golgi network membrane. Its subcellular location is the trans-Golgi network membrane. The protein localises to the cytoplasmic vesicle. It localises to the secretory vesicle membrane. The protein resides in the cell membrane. It is found in the melanosome. Functionally, cargo receptor involved in protein vesicular trafficking and quality control in the endoplasmic reticulum (ER) and Golgi. The p24 protein family is a group of transmembrane proteins that bind coat protein complex I/COPI and coat protein complex II/COPII involved in vesicular trafficking between the membranes. Acts at the lumenal side for incorporation of secretory cargo molecules into transport vesicles and involved in vesicle coat formation at the cytoplasmic side. Mainly functions in the early secretory pathway and cycles between the ER, ER-Golgi intermediate compartment (ERGIC) and Golgi, mediating cargo transport through COPI and COPII-coated vesicles. In COPII vesicle-mediated anterograde transport, involved in the transport of GPI-anchored proteins by acting together with TMED2 as their cargo receptor; the function specifically implies SEC24C and SEC24D of the COPII vesicle coat and lipid raft-like microdomains of the ER. Recognizes GPI anchors structural remodeled in the ER by the GPI inositol-deacylase/PGAP1 and the metallophosphoesterase MPPE1/PGAP5. In COPI vesicle-mediated retrograde transport, involved in the biogenesis of COPI vesicles and vesicle coat recruitment. Involved in trafficking of amyloid beta A4 protein and soluble APP-beta release (independent from the modulation of gamma-secretase activity). Involved in the KDELR2-mediated retrograde transport of the toxin A subunit (CTX-A-K63)together with COPI and the COOH terminus of KDELR2. On Golgi membranes, acts as a primary receptor for ARF1-GDP, a GTP-binding protein involved in COPI-vesicle formation. Increases coatomer-dependent GTPase-activating activity of ARFGAP2 which mediates the hydrolysis of ARF1-bound GTP and therefore modulates protein trafficking from the Golgi apparatus. Involved in the exocytic trafficking of G protein-coupled receptors F2LR1/PAR2 (trypsin and tryspin-like enzyme receptor), OPRM1 (opioid receptor) and P2RY4 (UTD and UDP receptor) from the Golgi to the plasma membrane, thus contributing to receptor resensitization. In addition to its cargo receptor activity, may also act as a protein channel after oligomerization, facilitating the post-translational entry of leaderless cytoplasmic cargo into the ERGIC. Involved in the translocation into ERGIC, the vesicle entry and the secretion of leaderless cargos (lacking the secretion signal sequence), including the mature form of interleukin 1/IL-1 family members, the alpha-crystallin B chain HSPB5, the carbohydrate-binding proteins galectin-1/LGALS1 and galectin-3/LGALS3, the microtubule-associated protein Tau/MAPT, and the annexin A1/ANXA1; the translocation process is dependent on cargo protein unfolding and enhanced by chaperones HSP90AB1 and HSP90B1/GRP9. Could also associates with the presenilin-dependent gamma-secretase complex in order to regulate gamma-cleavages of the amyloid beta A4 protein to yield amyloid-beta 40/Abeta40. The chain is Transmembrane emp24 domain-containing protein 10 from Rattus norvegicus (Rat).